The primary structure comprises 216 residues: Cobalt-zinc-cadmium resistance protein CzcN (216 aa).

The next 3 helical transmembrane spans lie at 27 to 47 (IGVWRVVVTFVLASLLFGHSR), 50 to 70 (GTWVSPLLLTLGMLGVSLATV), and 116 to 136 (ESLAVTAVLALAFALMYPAVI).

It to A.xylosoxydans NccN.

The protein resides in the cell inner membrane. In terms of biological role, component of the CZC cation-efflux system that confers resistance to cobalt, zinc and cadmium. In Cupriavidus metallidurans (strain ATCC 43123 / DSM 2839 / NBRC 102507 / CH34) (Ralstonia metallidurans), this protein is Cobalt-zinc-cadmium resistance protein CzcN (czcN).